We begin with the raw amino-acid sequence, 136 residues long: Large ribosomal subunit protein bL21 (136 aa).

It belongs to the bacterial ribosomal protein bL21 family. In terms of assembly, part of the 50S ribosomal subunit. Contacts protein L20.

This protein binds to 23S rRNA in the presence of protein L20. The chain is Large ribosomal subunit protein bL21 from Gloeothece citriformis (strain PCC 7424) (Cyanothece sp. (strain PCC 7424)).